The chain runs to 471 residues: ATP synthase subunit beta (471 aa).

154–161 provides a ligand contact to ATP; that stretch reads GGAGVGKT.

It belongs to the ATPase alpha/beta chains family. In terms of assembly, F-type ATPases have 2 components, CF(1) - the catalytic core - and CF(0) - the membrane proton channel. CF(1) has five subunits: alpha(3), beta(3), gamma(1), delta(1), epsilon(1). CF(0) has three main subunits: a(1), b(2) and c(9-12). The alpha and beta chains form an alternating ring which encloses part of the gamma chain. CF(1) is attached to CF(0) by a central stalk formed by the gamma and epsilon chains, while a peripheral stalk is formed by the delta and b chains.

The protein resides in the cell membrane. The enzyme catalyses ATP + H2O + 4 H(+)(in) = ADP + phosphate + 5 H(+)(out). In terms of biological role, produces ATP from ADP in the presence of a proton gradient across the membrane. The catalytic sites are hosted primarily by the beta subunits. This Mesomycoplasma hyopneumoniae (strain 7448) (Mycoplasma hyopneumoniae) protein is ATP synthase subunit beta.